The following is a 582-amino-acid chain: uncharacterized protein (582 aa).

The chain crosses the membrane as a helical span at residues 20–40; sequence GFWALGLFGAAINAFSAVLIV.

Its subcellular location is the membrane. This is an uncharacterized protein from Mycoplasma pneumoniae (strain ATCC 29342 / M129 / Subtype 1) (Mycoplasmoides pneumoniae).